A 338-amino-acid chain; its full sequence is Pseudouridylate synthase TRUB1 (338 aa).

Position 2 is an N-acetylalanine (Ala2). Catalysis depends on Asp109, which acts as the Nucleophile.

This sequence belongs to the pseudouridine synthase TruB family.

Its subcellular location is the nucleus. It is found in the cytoplasm. The protein resides in the cytosol. It carries out the reaction a uridine in mRNA = a pseudouridine in mRNA. The enzyme catalyses a uridine in tRNA = a pseudouridine in tRNA. It catalyses the reaction uridine(55) in tRNA = pseudouridine(55) in tRNA. Its function is as follows. Pseudouridine synthase that catalyzes pseudouridylation of mRNAs and tRNAs. Mediates pseudouridylation of mRNAs with the consensus sequence 5'-GUUCNANNC-3', harboring a stem-loop structure. Constitutes the major pseudouridine synthase acting on mRNAs. Also catalyzes pseudouridylation of some tRNAs, including synthesis of pseudouridine(55) from uracil-55, in the psi GC loop of a subset of tRNAs. Promotes the processing of pri-let-7 microRNAs (pri-miRNAs) independently of its RNA pseudouridylate synthase activity. Acts by binding to the stem-loop structure on pri-let-7, preventing LIN28-binding (LIN28A and/or LIN28B), thereby enhancing the interaction between pri-let-7 and the microprocessor DGCR8, which mediates miRNA maturation. This Mus musculus (Mouse) protein is Pseudouridylate synthase TRUB1.